The sequence spans 85 residues: UPF0297 protein Cbei_1105 (85 aa).

The protein belongs to the UPF0297 family.

This Clostridium beijerinckii (strain ATCC 51743 / NCIMB 8052) (Clostridium acetobutylicum) protein is UPF0297 protein Cbei_1105.